A 432-amino-acid polypeptide reads, in one-letter code: Glycosyltransferase 6 (432 aa).

Residues 1–18 (MGKPGGAKTRTAVCLSDG) are Cytoplasmic-facing. Residues 19–39 (VFFLAGAFMSLTLVWSYFSIF) form a helical; Signal-anchor for type II membrane protein membrane-spanning segment. At 40-432 (SPSFTSLRHD…LPFDYPNEAW (393 aa)) the chain is on the lumenal side. N-linked (GlcNAc...) asparagine glycosylation occurs at Asn315.

Belongs to the glycosyltransferase 34 family.

It localises to the golgi apparatus membrane. Probable glycosyltransferase that may be involved in the biosynthesis of xyloglucan. The sequence is that of Glycosyltransferase 6 (GT6) from Arabidopsis thaliana (Mouse-ear cress).